Consider the following 165-residue polypeptide: Phosphopantetheine adenylyltransferase (165 aa).

Position 9 (Ser-9) interacts with substrate. ATP-binding positions include 9 to 10 (SF) and His-17. Positions 41, 75, and 89 each coordinate substrate. ATP contacts are provided by residues 90–92 (GVR), Glu-100, and 125–131 (YLFVRSD).

This sequence belongs to the bacterial CoaD family. As to quaternary structure, homohexamer. Mg(2+) is required as a cofactor.

The protein resides in the cytoplasm. The enzyme catalyses (R)-4'-phosphopantetheine + ATP + H(+) = 3'-dephospho-CoA + diphosphate. It participates in cofactor biosynthesis; coenzyme A biosynthesis; CoA from (R)-pantothenate: step 4/5. Functionally, reversibly transfers an adenylyl group from ATP to 4'-phosphopantetheine, yielding dephospho-CoA (dPCoA) and pyrophosphate. The sequence is that of Phosphopantetheine adenylyltransferase from Borrelia hermsii (strain HS1 / DAH).